The following is a 208-amino-acid chain: Uracil phosphoribosyltransferase (208 aa).

5-phospho-alpha-D-ribose 1-diphosphate-binding positions include arginine 78, arginine 103, and 130-138; that span reads DPMLATGGS. Residues isoleucine 193 and 198–200 contribute to the uracil site; that span reads GDA. Residue aspartate 199 participates in 5-phospho-alpha-D-ribose 1-diphosphate binding.

Belongs to the UPRTase family. Mg(2+) serves as cofactor.

It catalyses the reaction UMP + diphosphate = 5-phospho-alpha-D-ribose 1-diphosphate + uracil. Its pathway is pyrimidine metabolism; UMP biosynthesis via salvage pathway; UMP from uracil: step 1/1. With respect to regulation, allosterically activated by GTP. Functionally, catalyzes the conversion of uracil and 5-phospho-alpha-D-ribose 1-diphosphate (PRPP) to UMP and diphosphate. The protein is Uracil phosphoribosyltransferase of Klebsiella pneumoniae subsp. pneumoniae (strain ATCC 700721 / MGH 78578).